The chain runs to 61 residues: Short neurotoxin 2 (61 aa).

4 disulfides stabilise this stretch: C3–C23, C17–C40, C42–C53, and C54–C59.

This sequence belongs to the three-finger toxin family. Short-chain subfamily. Type I alpha-neurotoxin sub-subfamily. In terms of tissue distribution, expressed by the venom gland.

The protein localises to the secreted. In terms of biological role, binds to muscle nicotinic acetylcholine receptor (nAChR) and inhibit acetylcholine from binding to the receptor, thereby impairing neuromuscular transmission. The protein is Short neurotoxin 2 of Naja haje haje (Egyptian cobra).